Reading from the N-terminus, the 339-residue chain is Phenylalanine--tRNA ligase alpha subunit (339 aa).

Glutamate 250 contacts Mg(2+).

It belongs to the class-II aminoacyl-tRNA synthetase family. Phe-tRNA synthetase alpha subunit type 1 subfamily. In terms of assembly, tetramer of two alpha and two beta subunits. Requires Mg(2+) as cofactor.

The protein localises to the cytoplasm. It carries out the reaction tRNA(Phe) + L-phenylalanine + ATP = L-phenylalanyl-tRNA(Phe) + AMP + diphosphate + H(+). The chain is Phenylalanine--tRNA ligase alpha subunit from Azobacteroides pseudotrichonymphae genomovar. CFP2.